Reading from the N-terminus, the 375-residue chain is EP300-interacting inhibitor of differentiation 3 (375 aa).

Residues 23–51 (AWQHLVKQEEEEAVKKEEKEEGEDEEEEG) are a coiled coil. Positions 30 to 68 (QEEEEAVKKEEKEEGEDEEEEGSDSSSDDPNPEPPCMHP) are disordered. The span at 42–60 (EEGEDEEEEGSDSSSDDPN) shows a compositional bias: acidic residues.

It belongs to the NSE4 family. Component of the SMC5-SMC6 complex which consists at least of SMC5, SMC6, NSMCE2, NSMCE1, NSMCE4A or EID3 and NSMCE3; EID3 seems to be a testis-specific subunit. NSMCE1, NSMCE4A or EID3 and NSMCE3 probably form a subcomplex that bridges the head domains of the SMC5:SMC6 heterodimer. Homodimer, and heterodimer with EID2. Interacts with the C-terminal region of CREBBP.

The protein localises to the nucleus. The protein resides in the cytoplasm. It is found in the chromosome. Its subcellular location is the telomere. Its function is as follows. Tissue-specific component of the SMC5-SMC6 complex, a complex involved in repair of DNA double-strand breaks by homologous recombination. The complex may promote sister chromatid homologous recombination by recruiting the SMC1-SMC3 cohesin complex to double-strand breaks. The complex is required for telomere maintenance via recombination and mediates sumoylation of shelterin complex (telosome) components. In terms of biological role, acts as a repressor of nuclear receptor-dependent transcription possibly by interfering with CREBBP-dependent coactivation. May function as a coinhibitor of other CREBBP/EP300-dependent transcription factors. In Mus musculus (Mouse), this protein is EP300-interacting inhibitor of differentiation 3.